The primary structure comprises 168 residues: Endoribonuclease YbeY (168 aa).

Positions 128, 132, and 138 each coordinate Zn(2+).

This sequence belongs to the endoribonuclease YbeY family. Zn(2+) serves as cofactor.

It is found in the cytoplasm. Single strand-specific metallo-endoribonuclease involved in late-stage 70S ribosome quality control and in maturation of the 3' terminus of the 16S rRNA. This is Endoribonuclease YbeY from Sphingopyxis alaskensis (strain DSM 13593 / LMG 18877 / RB2256) (Sphingomonas alaskensis).